We begin with the raw amino-acid sequence, 102 residues long: Turripeptide OL55-like (102 aa).

In terms of processing, contains 8 disulfide bonds. In terms of tissue distribution, expressed by the venom duct.

It is found in the secreted. Functionally, acts as a neurotoxin by inhibiting an ion channel. The sequence is that of Turripeptide OL55-like from Lophiotoma acuta (Marbled turris).